Here is a 1383-residue protein sequence, read N- to C-terminus: DNA-directed RNA polymerase subunit beta (1383 aa).

It belongs to the RNA polymerase beta chain family. The RNAP catalytic core consists of 2 alpha, 1 beta, 1 beta' and 1 omega subunit. When a sigma factor is associated with the core the holoenzyme is formed, which can initiate transcription.

It catalyses the reaction RNA(n) + a ribonucleoside 5'-triphosphate = RNA(n+1) + diphosphate. In terms of biological role, DNA-dependent RNA polymerase catalyzes the transcription of DNA into RNA using the four ribonucleoside triphosphates as substrates. In Bartonella tribocorum (strain CIP 105476 / IBS 506), this protein is DNA-directed RNA polymerase subunit beta.